The primary structure comprises 490 residues: MEESKEEVHVAFFPFMTPGHSIPMLDLVRLFIARGVKTTVFTTPLNAPNISKYLNIIQDSSSNKNTIYVTPFPSKEAGLPEGVESQDSTTSPEMTLKFFVAMELLQDPLDVFLKETKPHCLVADNFFPYATDIASKYGIPRFVFQFTGFFPMSVMMALNRFHPQNSVSSDDDPFLVPSLPHDIKLTKSQLQREYEGSDGIDTALSRLCNGAGRALFTSYGVIFNSFYQLEPDYVDYYTNTMGKRSRVWHVGPVSLCNRRHVEGKSGRGRSASISEHLCLEWLNAKEPNSVIYVCFGSLTCFSNEQLKEIATALERCEEYFIWVLKGGKDNEQEWLPQGFEERVEGKGLIIRGWAPQVLILDHEAIGGFVTHCGWNSTLESISAGVPMVTWPIYAEQFYNEKLVTDVLKVGVKVGSMKWSETTGATHLKHEEIEKALKQIMVGEEVLEMRKRASKLKEMAYNAVEEGGSSYSHLTSLIDDLMASKAVLQKF.

Residue H20 is the Proton acceptor of the active site. Residue D124 is the Charge relay of the active site. Residues S297, W353, A354, H371, N375, S376, E379, and Y393 each coordinate UDP.

This sequence belongs to the UDP-glycosyltransferase family. As to expression, mainly expressed in flowers, flower buds and young leaves, and, to a lesser extent, in old leaves, stems and roots.

It functions in the pathway secondary metabolite biosynthesis; terpenoid biosynthesis. In terms of biological role, component of the oleanane-type triterpene saponins (e.g. saponarioside A and saponarioside B) biosynthetic pathway, leading to the production of natural products with detergent properties used as traditional sources of soap. A glycosyltransferase that mediates the conversion of QA-triFRX to QA-triFRXX via the elongation of the C-28 sugar chain with a D-xylose. This is UDP-glucosyl transferase 73M2 from Saponaria officinalis (Common soapwort).